Here is a 358-residue protein sequence, read N- to C-terminus: Reverse gyrase subunit A (358 aa).

One can recognise a Topo IA-type catalytic domain in the interval 1-351 (MNATLRIRNR…KLYLELERVV (351 aa)). Residue Tyr-78 is the O-(5'-phospho-DNA)-tyrosine intermediate of the active site.

Belongs to the type IA topoisomerase family. As to quaternary structure, heterodimer of an RgyrA and RgyrB subunit. The topoisomerase domain is shared between the two subunits. Mg(2+) serves as cofactor.

It is found in the cytoplasm. Functionally, modifies the topological state of DNA by introducing positive supercoils in an ATP-dependent process; dATP also allows positive supercoiling. Increases the linking number in steps of +1. Only this subunit binds DNA, in isolation it does not hydrolyze ATP. Hydrolyzes ATP only in the presence of DNA. Transiently cleaves a single DNA strand and remains covalently bound to the 5' DNA end probably through a tyrosine residue. It changes linking number in steps of one, and nicks DNA preferentially at 5'-CNNN | 3'-sites with a strong preference for 4 pyrimidine residues. There are about 1000 heterodimers per cell. May be involved in rewinding the DNA strands in the regions of the chromosome that have opened up to allow transcription or replication. In terms of biological role, reverse gyrase activity is reconstituted after incubation at 80 degrees Celsius for 5 minutes, positive supercoiling requires ATP and Mg(2+). In the presence of ATP it binds and nicks substrate but does not make closed product. This Methanopyrus kandleri (strain AV19 / DSM 6324 / JCM 9639 / NBRC 100938) protein is Reverse gyrase subunit A.